The primary structure comprises 563 residues: Dihydroxy-acid dehydratase (563 aa).

Cys-50 lines the [2Fe-2S] cluster pocket. Asp-82 contributes to the Mg(2+) binding site. Cys-123 contacts [2Fe-2S] cluster. Residues Asp-124 and Lys-125 each contribute to the Mg(2+) site. N6-carboxylysine is present on Lys-125. Cys-195 serves as a coordination point for [2Fe-2S] cluster. Glu-447 is a Mg(2+) binding site. The Proton acceptor role is filled by Ser-473.

It belongs to the IlvD/Edd family. As to quaternary structure, homodimer. [2Fe-2S] cluster is required as a cofactor. It depends on Mg(2+) as a cofactor.

It carries out the reaction (2R)-2,3-dihydroxy-3-methylbutanoate = 3-methyl-2-oxobutanoate + H2O. The enzyme catalyses (2R,3R)-2,3-dihydroxy-3-methylpentanoate = (S)-3-methyl-2-oxopentanoate + H2O. Its pathway is amino-acid biosynthesis; L-isoleucine biosynthesis; L-isoleucine from 2-oxobutanoate: step 3/4. It participates in amino-acid biosynthesis; L-valine biosynthesis; L-valine from pyruvate: step 3/4. Functionally, functions in the biosynthesis of branched-chain amino acids. Catalyzes the dehydration of (2R,3R)-2,3-dihydroxy-3-methylpentanoate (2,3-dihydroxy-3-methylvalerate) into 2-oxo-3-methylpentanoate (2-oxo-3-methylvalerate) and of (2R)-2,3-dihydroxy-3-methylbutanoate (2,3-dihydroxyisovalerate) into 2-oxo-3-methylbutanoate (2-oxoisovalerate), the penultimate precursor to L-isoleucine and L-valine, respectively. This is Dihydroxy-acid dehydratase from Nostoc sp. (strain PCC 7120 / SAG 25.82 / UTEX 2576).